Here is a 301-residue protein sequence, read N- to C-terminus: Probable 2-dehydro-3-deoxy-D-pentonate aldolase YjhH (301 aa).

Active-site charge relay system residues include threonine 46 and tyrosine 109. Tyrosine 135 (proton donor) is an active-site residue. The Schiff-base intermediate with substrate role is filled by lysine 164.

This sequence belongs to the DapA family.

Its subcellular location is the cytoplasm. The enzyme catalyses 2-dehydro-3-deoxy-D-arabinonate = glycolaldehyde + pyruvate. Functions as a 2-dehydro-3-deoxy-D-pentonate aldolase. This Escherichia coli (strain K12) protein is Probable 2-dehydro-3-deoxy-D-pentonate aldolase YjhH (yjhH).